A 249-amino-acid polypeptide reads, in one-letter code: Proteasome subunit alpha type-3 (249 aa).

This sequence belongs to the peptidase T1A family. In terms of assembly, the 26S proteasome consists of a 20S proteasome core and two 19S regulatory subunits. The 20S proteasome core is composed of 28 subunits that are arranged in four stacked rings, resulting in a barrel-shaped structure. The two end rings are each formed by seven alpha subunits, and the two central rings are each formed by seven beta subunits. The catalytic chamber with the active sites is on the inside of the barrel.

Its subcellular location is the cytoplasm. The protein localises to the nucleus. In terms of biological role, the proteasome is a multicatalytic proteinase complex which is characterized by its ability to cleave peptides with Arg, Phe, Tyr, Leu, and Glu adjacent to the leaving group at neutral or slightly basic pH. The proteasome has an ATP-dependent proteolytic activity. In Spinacia oleracea (Spinach), this protein is Proteasome subunit alpha type-3 (PAG1).